A 393-amino-acid polypeptide reads, in one-letter code: Beta-1,4-galactosyltransferase 3 (393 aa).

At 1–10 (MLRRLLERPC) the chain is on the cytoplasmic side. Residues 11–31 (TLALLVGSQLAVMMYLSLGGF) traverse the membrane as a helical; Signal-anchor for type II membrane protein segment. Residues 32–393 (RSLSALFGRD…ANHTALRGSH (362 aa)) are Lumenal-facing. A glycan (N-linked (GlcNAc...) asparagine) is linked at Asn57. Cys77 and Cys119 form a disulfide bridge. Residue 130-134 (PHRAR) coordinates UDP-alpha-D-galactose. Asn166 carries N-linked (GlcNAc...) asparagine glycosylation. UDP-alpha-D-galactose is bound by residues 169–171 (FNR), 196–197 (VD), Tyr226, and Trp258. A disulfide bridge connects residues Cys190 and Cys209. Asp197 is a binding site for Mn(2+). 260–263 (GEDD) contacts N-acetyl-D-glucosamine. Position 291 (His291) interacts with Mn(2+). 291 to 293 (HRG) is a UDP-alpha-D-galactose binding site. Arg303 contributes to the N-acetyl-D-glucosamine binding site. Residues Asn337 and Asn385 are each glycosylated (N-linked (GlcNAc...) asparagine). Residues 339–393 (TADIGTDPRGPRAPSGPRYPPGSSQAFRQEMLQRRPPARPGPPPTANHTALRGSH) are disordered.

It belongs to the glycosyltransferase 7 family. Mn(2+) is required as a cofactor.

Its subcellular location is the golgi apparatus. The protein localises to the golgi stack membrane. It carries out the reaction an N-acetyl-beta-D-glucosaminyl derivative + UDP-alpha-D-galactose = a beta-D-galactosyl-(1-&gt;4)-N-acetyl-beta-D-glucosaminyl derivative + UDP + H(+). It catalyses the reaction N-acetyl-D-glucosamine + UDP-alpha-D-galactose = beta-D-galactosyl-(1-&gt;4)-N-acetyl-D-glucosamine + UDP + H(+). The catalysed reaction is a beta-D-GlcNAc-(1-&gt;3)-beta-D-Gal-(1-&gt;4)-beta-D-Glc-(1&lt;-&gt;1)-Cer(d18:1(4E)) + UDP-alpha-D-galactose = a neolactoside nLc4Cer(d18:1(4E)) + UDP + H(+). The enzyme catalyses a beta-D-glucosylceramide + UDP-alpha-D-galactose = a beta-D-galactosyl-(1-&gt;4)-beta-D-glucosyl-(1&lt;-&gt;1)-ceramide + UDP + H(+). It carries out the reaction a neolactoside IV(3)-beta-GlcNAc-nLc4Cer + UDP-alpha-D-galactose = a neolactoside nLc6Cer + UDP + H(+). It participates in protein modification; protein glycosylation. In terms of biological role, responsible for the synthesis of complex-type N-linked oligosaccharides in many glycoproteins as well as the carbohydrate moieties of glycolipids. This is Beta-1,4-galactosyltransferase 3 (B4GALT3) from Pongo abelii (Sumatran orangutan).